A 567-amino-acid chain; its full sequence is MNHSAVAQTGLYLLVLLALAWPLGRYLAALLEGRLAQRFAWMGRIERGILWLMGAAPDEEMGWKRYAAAILLFNLAGVVLLFLLQRWQGMLPLNPAGLEGMSADSALNTAVSFVTNTNWQGYSGETTMSLLTQMLGLAVQNFLSAATGIAVVVALVRGFVRSGGGAIGNAWLDLLRATLWLLLPLSIVVALVLVWQGVVQNWYAGLTISSLESHTTQLLASGPVASQEAIKLLGTNGGGFFNANSAHPFENPTPFSNWVEMLSIFLVPAALVVMFGRMVGDLRQGVVLLAAMTVLFVGAFAVVYLAESQANPLLTALGAAGDSGNLEGKEVRFGVLASSLFATITTAASCGAVNAMHDSLMPLGGGMTMLLMQLGEVVFGGVGSGLYGMLLFAVLAVFMAGLMIGRTPEYLGKKIGAPEMKLVSVAILVGPLLVLAGTAIAVLTEAGRAGMANPGAHGFSEVLYAFSSAANNNGSAFAGLSANTPFYNLMLAVAMWFGRFAVIVPVLALAGSLAGKPRLAATAGTLPTHGPLFVVLLVLSVLLIGALTYIPALALGPVIDHLQLFSR.

12 helical membrane-spanning segments follow: residues 11-31 (LYLL…AALL), 67-87 (AAAI…LQRW), 136-156 (GLAV…VALV), 179-199 (LWLL…QGVV), 255-275 (FSNW…VVMF), 286-306 (VVLL…VYLA), 333-353 (FGVL…CGAV), 363-383 (LGGG…GGVG), 385-405 (GLYG…LMIG), 422-442 (LVSV…AIAV), 489-509 (LMLA…VLAL), and 532-552 (LFVV…YIPA).

It belongs to the KdpA family. In terms of assembly, the system is composed of three essential subunits: KdpA, KdpB and KdpC.

The protein localises to the cell inner membrane. Part of the high-affinity ATP-driven potassium transport (or Kdp) system, which catalyzes the hydrolysis of ATP coupled with the electrogenic transport of potassium into the cytoplasm. This subunit binds the periplasmic potassium ions and delivers the ions to the membrane domain of KdpB through an intramembrane tunnel. In Laribacter hongkongensis (strain HLHK9), this protein is Potassium-transporting ATPase potassium-binding subunit.